The following is a 197-amino-acid chain: Protein lin-7 homolog C (197 aa).

Ala-2 carries the post-translational modification N-acetylalanine. The Kinase interacting site motif lies at 2–13; it reads AALGEPVRLERD. In terms of domain architecture, L27 spans 10–65; that stretch reads LERDICRAIELLEKLQRSGEVPPQKLQALQRVLQSEFCNAVREVYEHVYETVDISS. The PDZ domain maps to 93 to 175; that stretch reads VVELPKTEEG…KVKLVVRYTP (83 aa).

It belongs to the lin-7 family. As to quaternary structure, forms a complex with CASK and APBA1 or CASKIN1. Component of the brain-specific heterotrimeric complex (LIN-10-LIN-2-LIN-7 complex) composed of at least APBA1, CASK, and LIN7, which associates with the motor protein KIF17 to transport vesicles along microtubules. Can also interact with other modular proteins containing protein-protein interaction domains like PALS1, PALS2, MPP7, DLG1, DLG2 and DLG3 through its L27 domain. Interacts with DLG4 and GRIN2B as well as CDH1 and CTNNB1, the channels KCNJ12/Kir2.2, KCNJ4/Kir2.3 and probably KCNJ2/Kir2.1 and SLC6A12/BGT-1 via its PDZ domain. The association of LIN7A with cadherin and beta-catenin is calcium-dependent, occurs at synaptic junctions and requires the actin cytoskeleton. Interacts with EGFR, ERBB2, ERBB3 and ERBB4 with both PDZ and KID domains. Associates with KIF17 via APBA1. Interacts with HTR4. Forms a tripartite complex composed of DLG1, MPP7 and LIN7 (LIN7A or LIN7C). Interacts with MAPK12.

It is found in the cell membrane. Its subcellular location is the basolateral cell membrane. The protein localises to the cell junction. The protein resides in the postsynaptic density membrane. It localises to the tight junction. It is found in the synapse. Its subcellular location is the synaptosome. Functionally, plays a role in establishing and maintaining the asymmetric distribution of channels and receptors at the plasma membrane of polarized cells. Forms membrane-associated multiprotein complexes that may regulate delivery and recycling of proteins to the correct membrane domains. The tripartite complex composed of LIN7 (LIN7A, LIN7B or LIN7C), CASK and APBA1 associates with the motor protein KIF17 to transport vesicles containing N-methyl-D-aspartate (NMDA) receptor subunit NR2B along microtubules. This complex may have the potential to couple synaptic vesicle exocytosis to cell adhesion in brain. Ensures the proper localization of GRIN2B (subunit 2B of the NMDA receptor) to neuronal postsynaptic density and may function in localizing synaptic vesicles at synapses where it is recruited by beta-catenin and cadherin. Required to localize Kir2 channels, GABA transporter (SLC6A12) and EGFR/ERBB1, ERBB2, ERBB3 and ERBB4 to the basolateral membrane of epithelial cells. The protein is Protein lin-7 homolog C (LIN7C) of Bos taurus (Bovine).